Consider the following 665-residue polypeptide: Target of rapamycin complex 2 subunit sin1 (665 aa).

At S62 the chain carries Phosphoserine. Polar residues-rich tracts occupy residues 65–83 and 100–109; these read IVAN…TKQV and YATSDLSESS. The tract at residues 65-112 is disordered; the sequence is IVANDTVSNVRKPSDTKQVNGAGGQVNHSRAEDSDYATSDLSESSDVG. Phosphoserine is present on S133. The region spanning 255–392 is the CRIM domain; the sequence is TSALRALLEH…ATPAQIKENQ (138 aa). Positions 395-433 are disordered; sequence YPFKSKHPTSIPEANNKTHIRHTSSTSSQSQKQAQDVKD. Residues S404, S490, S502, and S530 each carry the phosphoserine modification. Positions 517-537 are disordered; the sequence is RDKKGSTQQLPTSSPQNSVYG. Polar residues predominate over residues 522–536; that stretch reads STQQLPTSSPQNSVY. Positions 558–659 constitute an SIN1-type PH domain; the sequence is TYQEFLVWKR…IVSRIRALMN (102 aa).

This sequence belongs to the SIN1 family. The target of rapamycin complex 2 (TORC2) is composed of at least bit61, pop3/wat1, sin1, ste20 and tor1. Interacts with the sty1 MAP kinase. In terms of processing, phosphorylated; under environmental stress. Either Ser-61 or Ser-62 and Ser-298, Ser-299 or Ser-301 are phosphorylated as well.

Functionally, component of the mechanistic target of rapamycin complex 2 (mTORC2), which regulates multiple cellular processes to control cell growth in response to environmental signals. In response to signals, TORC2 phosphorylates AGC protein kinase family members, such as gad8. TORC2 is required for cell survival under various stress conditions. TORC2 positively controls G1 cell-cycle arrest, sexual development and amino acid uptake. Positively regulates amino acid uptake through the control of expression of amino acid permeases. Within the mTORC2 complex, sin1 acts as a substrate adapter which recognizes and binds AGC protein kinase family members for phosphorylation by tor1. In Schizosaccharomyces pombe (strain 972 / ATCC 24843) (Fission yeast), this protein is Target of rapamycin complex 2 subunit sin1.